Reading from the N-terminus, the 133-residue chain is Snaclec echicetin subunit alpha (133 aa).

3 disulfide bridges follow: Cys4/Cys15, Cys31/Cys127, and Cys102/Cys119. Residues 11–128 (YEGHCYQLFR…CEFKFPFVCK (118 aa)) enclose the C-type lectin domain.

The protein belongs to the snaclec family. In terms of assembly, heterodimer of subunits alpha and beta; disulfide-linked. Forms an active complex with the pentameric immunoglobuline Mkappa (IgMkappa). As to expression, expressed by the venom gland.

The protein resides in the secreted. Echicetin itself inhibits aggregation of washed platelets induced by vWF, thrombin or alboaggregin-A. However, when complexed with the pentameric plasma immunoglobulin Mkappa (IgMkappa), echicetin binds specifically to GPIb and activates platelets. This is caused by P-selectin expression and activation of alpha-IIb/beta-3 as well as tyrosine phosphorylation of several signal transduction molecules, including p53/56(LYN), p64, p72(SYK), p70 to p90, and p120. In vivo, it induces thrombocytopenia when injected into mice, probably accounting of activation of platelets rather than inhibition. The polypeptide is Snaclec echicetin subunit alpha (Echis carinatus sochureki (Saw-scaled viper)).